Here is a 303-residue protein sequence, read N- to C-terminus: Probable 5-dehydro-4-deoxyglucarate dehydratase (303 aa).

Belongs to the DapA family.

The catalysed reaction is 5-dehydro-4-deoxy-D-glucarate + H(+) = 2,5-dioxopentanoate + CO2 + H2O. It participates in carbohydrate acid metabolism; D-glucarate degradation; 2,5-dioxopentanoate from D-glucarate: step 2/2. This is Probable 5-dehydro-4-deoxyglucarate dehydratase from Acidovorax ebreus (strain TPSY) (Diaphorobacter sp. (strain TPSY)).